A 508-amino-acid polypeptide reads, in one-letter code: Photosystem II CP47 reaction center protein (508 aa).

The next 6 membrane-spanning stretches (helical) occupy residues 21-36 (SVHI…WAGS), 101-115 (IVFS…IWHW), 140-156 (GIHL…FGAF), 203-218 (IAAG…FHLS), 237-252 (VLSS…AFVV), and 457-472 (SFAL…HGAR).

This sequence belongs to the PsbB/PsbC family. PsbB subfamily. In terms of assembly, PSII is composed of 1 copy each of membrane proteins PsbA, PsbB, PsbC, PsbD, PsbE, PsbF, PsbH, PsbI, PsbJ, PsbK, PsbL, PsbM, PsbT, PsbX, PsbY, PsbZ, Psb30/Ycf12, at least 3 peripheral proteins of the oxygen-evolving complex and a large number of cofactors. It forms dimeric complexes. Binds multiple chlorophylls. PSII binds additional chlorophylls, carotenoids and specific lipids. is required as a cofactor.

It localises to the plastid. The protein resides in the chloroplast thylakoid membrane. Functionally, one of the components of the core complex of photosystem II (PSII). It binds chlorophyll and helps catalyze the primary light-induced photochemical processes of PSII. PSII is a light-driven water:plastoquinone oxidoreductase, using light energy to abstract electrons from H(2)O, generating O(2) and a proton gradient subsequently used for ATP formation. This is Photosystem II CP47 reaction center protein from Manihot esculenta (Cassava).